A 250-amino-acid polypeptide reads, in one-letter code: Hydroxyethylthiazole kinase (250 aa).

Residue Met-39 participates in substrate binding. Arg-114 and Thr-159 together coordinate ATP. Substrate is bound at residue Gly-186.

This sequence belongs to the Thz kinase family. The cofactor is Mg(2+).

The catalysed reaction is 5-(2-hydroxyethyl)-4-methylthiazole + ATP = 4-methyl-5-(2-phosphooxyethyl)-thiazole + ADP + H(+). The protein operates within cofactor biosynthesis; thiamine diphosphate biosynthesis; 4-methyl-5-(2-phosphoethyl)-thiazole from 5-(2-hydroxyethyl)-4-methylthiazole: step 1/1. Functionally, catalyzes the phosphorylation of the hydroxyl group of 4-methyl-5-beta-hydroxyethylthiazole (THZ). The protein is Hydroxyethylthiazole kinase of Lactococcus lactis subsp. cremoris (strain MG1363).